A 453-amino-acid polypeptide reads, in one-letter code: MNEGQEMEEQFALLLETLKNQQMNEFRELFLALHIYEQGQFYQSLDEKDRQHLYNYLSPKELADMFDVIEEDNENMKDYLAEMRPSYAADMLAEMYTDNAVDLLNMLDKSQKAKYLSLLSSEEAGEIKELLHYEDETAGAIMTTEFVSIVANQTVRSAMYVLKNQADMAETIYYVYVVDQENHLVGVISLRDLIVNDDDTLIADILNERVISVHVGDDQEDVAQTIRDYDFLAVPVTDYDDHLLGIVTVDDIIDVIDDEAASDYSGLAGVDVEEVSENPLKAASKRLPWLITLLFLGMSTASLISNYESLVSEASILAVFISLITGTAGNAGTQSLAVAVRRLAMKDEKDSNFGRLILSEVLTGLVTGAVTGLTIMIVVGVWQHNLPLGFVIGMAMLCAITVANLAGSLIPMLMDKLGFDPAVASGPFITTLSDLTSVLIYFNIASMFMRYFV.

The Cytoplasmic segment spans residues 1–286 (MNEGQEMEEQ…ENPLKAASKR (286 aa)). The Mg(2+) site is built by glutamate 71, aspartate 98, aspartate 102, glutamate 136, alanine 140, tyrosine 176, arginine 227, aspartate 230, alanine 233, aspartate 251, and glutamate 259. 2 consecutive CBS domains span residues 142–205 (MTTE…IADI) and 206–262 (LNER…EAAS). A helical transmembrane segment spans residues 287-307 (LPWLITLLFLGMSTASLISNY). Position 308 (glutamate 308) is a topological domain, extracellular. A helical membrane pass occupies residues 309-329 (SLVSEASILAVFISLITGTAG). At 330-360 (NAGTQSLAVAVRRLAMKDEKDSNFGRLILSE) the chain is on the cytoplasmic side. A helical membrane pass occupies residues 361–381 (VLTGLVTGAVTGLTIMIVVGV). Residues 382 to 389 (WQHNLPLG) lie on the Extracellular side of the membrane. A helical transmembrane segment spans residues 390 to 410 (FVIGMAMLCAITVANLAGSLI). Topologically, residues 411-427 (PMLMDKLGFDPAVASGP) are cytoplasmic. The chain crosses the membrane as a helical span at residues 428–448 (FITTLSDLTSVLIYFNIASMF). Aspartate 434 lines the Mg(2+) pocket. At 449–453 (MRYFV) the chain is on the extracellular side.

Belongs to the SLC41A transporter family. As to quaternary structure, homodimer.

It localises to the cell membrane. It catalyses the reaction Mg(2+)(in) = Mg(2+)(out). In terms of biological role, acts as a magnesium transporter. This is Magnesium transporter MgtE from Enterococcus faecalis (strain ATCC 700802 / V583).